A 2506-amino-acid polypeptide reads, in one-letter code: Highly reducing polyketide synthase rstn3 (2506 aa).

The 429-residue stretch at 8–436 folds into the Ketosynthase family 3 (KS3) domain; sequence VEPIAIVGMA…GANAHAILDA (429 aa). Catalysis depends on for beta-ketoacyl synthase activity residues cysteine 183, histidine 318, and histidine 358. The Malonyl-CoA:ACP transacylase (MAT) domain maps to 547 to 875; that stretch reads FIFTGQGAQW…KMVGSLFLSG (329 aa). The N-terminal hotdog fold stretch occupies residues 941 to 1050; that stretch reads HDLLGSRLPG…ASDQSISSVE (110 aa). The region spanning 941–1212 is the PKS/mFAS DH domain; it reads HDLLGSRLPG…FSSLETAVGE (272 aa). Histidine 973 (proton acceptor; for dehydratase activity) is an active-site residue. The interval 1060-1212 is C-terminal hotdog fold; the sequence is NKDSYDRRWY…FSSLETAVGE (153 aa). Catalysis depends on aspartate 1125, which acts as the Proton donor; for dehydratase activity. Residues 1263–1563 are methyltransferase (CMet) domain; that stretch reads VTRLAIRSSA…SGADIVLDDY (301 aa). Residues 1827 to 2093 enclose the Enoyl reductase (ER) domain; sequence GRVDSFYFKE…QDDYVGRVVL (267 aa). The region spanning 2116-2296 is the Ketoreductase (KR) domain; it reads ASYLLIGCLG…QATSIALGMI (181 aa). Residues 2423 to 2501 enclose the Carrier domain; the sequence is AVKVTTLGLI…DLAEKVVALA (79 aa). Position 2460 is an O-(pantetheine 4'-phosphoryl)serine (serine 2460).

Requires pantetheine 4'-phosphate as cofactor.

It participates in antifungal biosynthesis. Highly reducing polyketide synthase; part of the gene cluster that mediates the biosynthesis of the tetrahydropyranyl antifungal agent restricticin that acts as an inhibitor of CYP51 and blocks the ergosterol biosynthesis. The highly reducing polyketide synthase rstn3, the short chain dehydrogenase rstn4, the cyclase rstn5, the FAD-dependent monooxygenase rstn6 and the enoylreductase rstn7 are required to generate the first stable intermediate desmethylrestrictinol. Rstn3 with rstn7 biosynthesize the first polyketide chain intermediate that is reduced by rstn4, followed by epoxidation by rstn6 before 6-endo cyclization via epoxide opening by rstn5 leads to desmethylrestrictinol. The methyltransferase rstn1 then catalyzes the C4 O-methylation of desmethylrestrictinol to produce restrictinol, and the nonribosomal peptide synthetase rstn8 catalyzes the C3 esterification of restrictinol with glycine that leads to restricticin. This chain is Highly reducing polyketide synthase rstn3, found in Aspergillus nomiae NRRL (strain ATCC 15546 / NRRL 13137 / CBS 260.88 / M93).